Here is a 372-residue protein sequence, read N- to C-terminus: 7-methylxanthosine synthase 1 (372 aa).

Y18 contacts S-adenosyl-L-homocysteine. Residues N21 and N25 each coordinate xanthosine. S-adenosyl-L-homocysteine is bound by residues C62, N67, D101, L102, S140, F141, and C157. Residue Y158 coordinates xanthosine. C159 is a binding site for S-adenosyl-L-homocysteine. The xanthosine site is built by Q161 and W162. 4 residues coordinate Mg(2+): N179, D261, F263, and N264. Residues S316, Y321, and Y356 each contribute to the xanthosine site.

It belongs to the methyltransferase superfamily. Type-7 methyltransferase family. It depends on Mg(2+) as a cofactor. As to expression, expressed in stems, young leaves, floral buds, developing endosperm and immature fruits (grains). Detected in roots and old leaves, but not in mature fruits.

The catalysed reaction is xanthosine + S-adenosyl-L-methionine = 7-methylxanthosine + S-adenosyl-L-homocysteine. Its pathway is alkaloid biosynthesis. Its function is as follows. Involved in the biosynthesis of caffeine. Specific for xanthosine and could not use xanthosine 5'-monophosphate (XMP) as substrate. Catalyzes the 7-N-methylation activity of xanthosine, but does not have 1-N- or 3-N-methylation activity. The sequence is that of 7-methylxanthosine synthase 1 from Coffea arabica (Arabian coffee).